Here is a 284-residue protein sequence, read N- to C-terminus: MQNKVIRLGEIEISNDKPFVLFGGMNVLESRDMAMQVCEAYVKVTEKLGVPYVFKASFDKANRSSIHSYRGPGMEQGLKIFQELKDTFGVKLITDVHEIYQCQPVAEVVDIIQLPAFLARQTDLVAAMAKTGAIINVKKPQFLSPGQMGNIVEKIEECGNDNVILCDRGTNFGYDNLVVDMLGFSVMKKVSKGCPVIFDVTHALQCRDPFGAASGGRRGQVTELARAGMAVGLAGLFLEAHPNPSQAKCDGPSALPLSALEGFVHQMKAIDDLVKHFPELDTAN.

Belongs to the KdsA family.

Its subcellular location is the cytoplasm. The catalysed reaction is D-arabinose 5-phosphate + phosphoenolpyruvate + H2O = 3-deoxy-alpha-D-manno-2-octulosonate-8-phosphate + phosphate. It functions in the pathway carbohydrate biosynthesis; 3-deoxy-D-manno-octulosonate biosynthesis; 3-deoxy-D-manno-octulosonate from D-ribulose 5-phosphate: step 2/3. Its pathway is bacterial outer membrane biogenesis; lipopolysaccharide biosynthesis. In Pasteurella multocida (strain Pm70), this protein is 2-dehydro-3-deoxyphosphooctonate aldolase (kdsA).